The chain runs to 225 residues: Tryptophan synthase beta chain (225 aa).

Belongs to the TrpB family. In terms of assembly, tetramer of two alpha and two beta chains. Requires pyridoxal 5'-phosphate as cofactor.

It catalyses the reaction (1S,2R)-1-C-(indol-3-yl)glycerol 3-phosphate + L-serine = D-glyceraldehyde 3-phosphate + L-tryptophan + H2O. Its pathway is amino-acid biosynthesis; L-tryptophan biosynthesis; L-tryptophan from chorismate: step 5/5. In terms of biological role, the beta subunit is responsible for the synthesis of L-tryptophan from indole and L-serine. The polypeptide is Tryptophan synthase beta chain (trpB) (Buchnera aphidicola subsp. Rhopalosiphum padi).